We begin with the raw amino-acid sequence, 295 residues long: CBY1-interacting BAR domain-containing protein 1 (295 aa).

The transit peptide at 1–49 (MMSRTPDARARDTQTKQIQENITSVEKHFGDLCQLFAAYVRKTARLRDK) directs the protein to the mitochondrion. Residues 12–222 (DTQTKQIQEN…NVDEEGDLEV (211 aa)) are BAR-like. Positions 111 to 185 (KREDLKQTQS…KQKIRDIKKV (75 aa)) form a coiled coil. The segment covering 243-265 (SKLSLNRTGTSMSKSGTMQSRTS) has biased composition (polar residues). Residues 243–295 (SKLSLNRTGTSMSKSGTMQSRTSSRQRKRDDEEDEEEDDEDEDDLEEVTDDEH) form a disordered region. Over residues 273–295 (DEEDEEEDDEDEDDLEEVTDDEH) the composition is skewed to acidic residues.

Belongs to the CIBAR family.

The protein resides in the cytoplasm. It localises to the cytoskeleton. The protein localises to the microtubule organizing center. Its subcellular location is the centrosome. It is found in the centriole. The protein resides in the cell projection. It localises to the cilium. The protein localises to the nucleus. Its subcellular location is the mitochondrion inner membrane. It is found in the flagellum. Functionally, plays a critical role in regulating mitochondrial ultrastructure and function by maintaining the integrity of mitochondrial morphology, particularly the organization of cristae. Plays a crucial role in ciliogenesis. Plays a key role in the correct positioning of the annulus, a septin-based ring structure in the sperm flagellum, serving both as a physical barrier and a membrane diffusion barrier that separates the midpiece (MP) from the principal piece (PP). The protein is CBY1-interacting BAR domain-containing protein 1 (cibar1) of Danio rerio (Zebrafish).